Here is a 422-residue protein sequence, read N- to C-terminus: Synaptotagmin-1 (422 aa).

Residues 1–57 (MVSESHHEALAAPPVTTVATVLPHNATEPASPGEGKEDAFSKLKEKFMNELHKIPLP) lie on the Vesicular side of the membrane. An N-linked (GlcNAc...) asparagine glycan is attached at N25. A helical transmembrane segment spans residues 58–80 (PWALIAIAIVAVLLVLTCCFCIC). 5 S-palmitoyl cysteine lipidation sites follow: C75, C76, C78, C80, and C83. Residues 81–422 (KKCLFKKKNK…EVDAMLAVKK (342 aa)) lie on the Cytoplasmic side of the membrane. The interval 113 to 142 (TMKDQALKDDDAETGLTDGEEKEEPKEEEK) is disordered. Over residues 122–134 (DDAETGLTDGEEK) the composition is skewed to acidic residues. At T129 the chain carries Phosphothreonine. The tract at residues 136–382 (EPKEEEKLGK…AIGKVFVGYN (247 aa)) is phospholipid binding. The 120-residue stretch at 142–261 (KLGKLQYSLD…DFGHVTEEWR (120 aa)) folds into the C2 1 domain. Residues L172, D173, and D179 each coordinate Ca(2+). Position 230 is a phosphotyrosine (Y230). 6 residues coordinate Ca(2+): D231, F232, D233, S236, K237, and D239. Phosphoserine is present on S265. In terms of domain architecture, C2 2 spans 273–406 (KLGDICFSLR…NPRRPIAQWH (134 aa)). 2 residues coordinate Ca(2+): D304 and D310. 2 positions are modified to phosphoserine: S343 and S345. Residues D364, D366, and D372 each coordinate Ca(2+).

Belongs to the synaptotagmin family. Homotetramer. Heterodimer; heterodimerizes with SYT2 in presence of calcium. Interacts with SCAMP5. Interacts with STON2. Forms a complex with SV2B, syntaxin 1 and SNAP25. Interacts with SV2A, SV2B and SV2C. Interacts with RIMS1. Interacts with PRRT2. Interacts with DNAJC5 in a phosphorylation-dependent manner. Interacts (via N-terminus) with RAB3A. Interacts with SYT12. Interacts with calmodulin. Interacts with DNM1 (via C-terminal proline-rich domain (PRD)); this interaction facilitates vesicle fission during clathrin-mediated endocytosis (CME). The cofactor is Ca(2+). In terms of processing, glycosylated.

Its subcellular location is the cytoplasmic vesicle. It localises to the secretory vesicle membrane. It is found in the secretory vesicle. The protein localises to the synaptic vesicle membrane. The protein resides in the chromaffin granule membrane. Its subcellular location is the cytoplasm. Functionally, calcium sensor that participates in triggering neurotransmitter release at the synapse. May have a regulatory role in the membrane interactions during trafficking of synaptic vesicles at the active zone of the synapse. It binds acidic phospholipids with a specificity that requires the presence of both an acidic head group and a diacyl backbone. A Ca(2+)-dependent interaction between synaptotagmin and putative receptors for activated protein kinase C has also been reported. It can bind to at least three additional proteins in a Ca(2+)-independent manner; these are neurexins, syntaxin and AP2. Plays a role in dendrite formation by melanocytes. This is Synaptotagmin-1 from Bos taurus (Bovine).